We begin with the raw amino-acid sequence, 353 residues long: Methionine import ATP-binding protein MetN (353 aa).

The ABC transporter domain maps to 8 to 249 (LDQIDVTFHQ…PKQPLTQDFI (242 aa)). 42-49 (GYSGAGKS) contacts ATP.

The protein belongs to the ABC transporter superfamily. Methionine importer (TC 3.A.1.24) family. As to quaternary structure, the complex is composed of two ATP-binding proteins (MetN), two transmembrane proteins (MetI) and a solute-binding protein (MetQ).

Its subcellular location is the cell membrane. The enzyme catalyses L-methionine(out) + ATP + H2O = L-methionine(in) + ADP + phosphate + H(+). It catalyses the reaction D-methionine(out) + ATP + H2O = D-methionine(in) + ADP + phosphate + H(+). In terms of biological role, part of the ABC transporter complex MetNIQ involved in methionine import. Responsible for energy coupling to the transport system. The protein is Methionine import ATP-binding protein MetN of Streptococcus pneumoniae (strain ATCC BAA-255 / R6).